Consider the following 442-residue polypeptide: Terpene cyclase aneC (442 aa).

Residues aspartate 196, asparagine 327, serine 331, and glutamate 335 each coordinate Mg(2+). (2E,6E)-farnesyl diphosphate contacts are provided by arginine 419 and tyrosine 420.

It belongs to the terpene synthase family. Homodimer. Mg(2+) is required as a cofactor.

It carries out the reaction (2E,6E)-farnesyl diphosphate = dauca-4,7-diene + diphosphate. It participates in secondary metabolite biosynthesis. Its function is as follows. Terpene cyclase; part of the gene cluster that mediates the biosynthesis of aculenes, a unique type of norsesquiterpenes that contain a nordaucane skeleton linked to an L-proline moiety and are of mixed biosynthetic origin. The pathway begins with the synthesis of dauca-4,7-diene by the terpene cyclase aneC using farnesyl pyrophosphate (FPP) as substrate. The cytochrome P450 monooxygenase aneF then performs the initial oxidation at C-12 of dauca-4,7-diene to yield asperaculane D. Asperaculane D is substrate of the cytochrome P450 monooxygenase aneD for C-10 hydroxylation to yield asperaculane E. The cytochrome P450 monooxygenase aneG then converts asperaculane E into aculene D via C-2 oxidation. The monomodular nonribosomal peptide synthtase aneB adenylates L-proline and the thiohydrolase aneE transfers this activated L-proline derivative to aculenes D and C to produce respectively aculenes B and A. The dioxygenase aneA converts aculene D into aculene C, and aculene B into aculene A by introducing the 5,6-alkene moiety. Asperculanes A, B, C and F, as well as 14-prolyl asperculane C, might be shunt products of the pathway. The sequence is that of Terpene cyclase aneC from Aspergillus aculeatus (strain ATCC 16872 / CBS 172.66 / WB 5094).